A 104-amino-acid chain; its full sequence is Type IV secretion system protein PtlB homolog (104 aa).

The helical transmembrane segment at 30 to 50 threads the bilayer; sequence IALLGIWFSIAFLALFPVALL.

Belongs to the virB3 family.

It localises to the cell membrane. The sequence is that of Type IV secretion system protein PtlB homolog (ptlB) from Bordetella bronchiseptica (strain ATCC BAA-588 / NCTC 13252 / RB50) (Alcaligenes bronchisepticus).